The primary structure comprises 369 residues: tRNA-specific 2-thiouridylase MnmA (369 aa).

Residues 7-14 and Met33 each bind ATP; that span reads GISGGVDS. Positions 93–95 are interaction with target base in tRNA; it reads NPD. Cys98 functions as the Nucleophile in the catalytic mechanism. Cys98 and Cys195 are disulfide-bonded. Gly123 provides a ligand contact to ATP. The interaction with tRNA stretch occupies residues 145–147; sequence KDQ. Catalysis depends on Cys195, which acts as the Cysteine persulfide intermediate. The interval 307 to 308 is interaction with tRNA; the sequence is RY.

Belongs to the MnmA/TRMU family. As to quaternary structure, interacts with TusE.

It localises to the cytoplasm. It carries out the reaction S-sulfanyl-L-cysteinyl-[protein] + uridine(34) in tRNA + AH2 + ATP = 2-thiouridine(34) in tRNA + L-cysteinyl-[protein] + A + AMP + diphosphate + H(+). Catalyzes the 2-thiolation of uridine at the wobble position (U34) of tRNA(Lys), tRNA(Glu) and tRNA(Gln), leading to the formation of s(2)U34, the first step of tRNA-mnm(5)s(2)U34 synthesis. Sulfur is provided by IscS, via a sulfur-relay system. Binds ATP and its substrate tRNAs. The sequence is that of tRNA-specific 2-thiouridylase MnmA from Blochmanniella floridana.